The chain runs to 202 residues: Large ribosomal subunit protein bL17 (202 aa).

The segment at 148–202 is disordered; it reads DEAPAAESTDAAQVEAGGVEQPDTLPDADAPATADEGVEVDAAEVDPSDEKKDQA. Residues 169 to 182 show a composition bias toward low complexity; that stretch reads PDTLPDADAPATAD. Residues 183–194 show a composition bias toward acidic residues; that stretch reads EGVEVDAAEVDP.

The protein belongs to the bacterial ribosomal protein bL17 family. Part of the 50S ribosomal subunit. Contacts protein L32.

This is Large ribosomal subunit protein bL17 from Kineococcus radiotolerans (strain ATCC BAA-149 / DSM 14245 / SRS30216).